The sequence spans 307 residues: Acetaldehyde dehydrogenase 2 (307 aa).

Ser-13 to Ile-16 serves as a coordination point for NAD(+). The Acyl-thioester intermediate role is filled by Cys-132. Residues Ser-163–Asn-171 and Asn-274 contribute to the NAD(+) site.

Belongs to the acetaldehyde dehydrogenase family.

The catalysed reaction is acetaldehyde + NAD(+) + CoA = acetyl-CoA + NADH + H(+). The protein is Acetaldehyde dehydrogenase 2 of Methylibium petroleiphilum (strain ATCC BAA-1232 / LMG 22953 / PM1).